A 335-amino-acid chain; its full sequence is MKGIFEKLKRRIDILLYKLGIRPLSIETLKELKESRKEREVLEFYDVYMEPEEFVDIEKYEFILYEGDIVGKTAESLSKIFKGNLFPSRNELRYMGVKDEVAYFKKVVIYMIITFLALLFMGLLDNNLLQGFVNGLIGAGIILVLSLFYPKIRLILFKGEIKLQILFTLIYMISILRAGASLPEVLESISKSREYGVVAFEAKSIIRDVNIGGYNLVEALERAKMRTRIPILKKLYDQMIVGYNKGNLPLLLGKLYEDIVRESMVKLDSSKFMIQNLGNLAFGVGLILPFTGMILSTMIGNQGFSGILSTINLLLLKIGPLLTLIFGIFVKLKIE.

4 helical membrane-spanning segments follow: residues 104–124 (FKKV…MGLL), 128–148 (LLQG…LSLF), 280–300 (LAFG…TMIG), and 310–330 (TINL…GIFV).

It localises to the cell membrane. This is an uncharacterized protein from Methanocaldococcus jannaschii (strain ATCC 43067 / DSM 2661 / JAL-1 / JCM 10045 / NBRC 100440) (Methanococcus jannaschii).